A 2380-amino-acid chain; its full sequence is DNA polymerase epsilon catalytic subunit A (2380 aa).

Residues 169–196 (YYNKGNNNNNNHQNYNNNNNQNNNNFNK) show a composition bias toward low complexity. 5 disordered regions span residues 169–209 (YYNK…NNSK), 1178–1210 (FFEK…QQTD), 1766–1787 (KNTS…NDTT), 1967–1998 (QQQQ…KNKK), and 2059–2120 (KIST…TTTS). Residues 1183–1201 (EDNDQDNDNDNDNDNDNDN) are compositionally biased toward acidic residues. The segment covering 1767-1776 (NTSNNSNTKN) has biased composition (low complexity). The segment covering 1777 to 1787 (GANQNTTNDTT) has biased composition (polar residues). Acidic residues predominate over residues 1975 to 1991 (NADDDDDDDVSENEEEQ). Composition is skewed to low complexity over residues 2059–2081 (KIST…TTKD) and 2110–2120 (SSSSSTTTTTS). The Zn(2+) site is built by Cys-2225 and Cys-2228. The CysA-type zinc finger occupies 2225–2288 (CSSCHSCRDI…RVPELSCIQC (64 aa)). Residues 2245 to 2258 (ISSRLSSQQKSNNN) are compositionally biased toward low complexity. The disordered stretch occupies residues 2245-2275 (ISSRLSSQQKSNNNDSDDSDDDNEENEGDDD). Residues 2259–2275 (DSDDSDDDNEENEGDDD) show a composition bias toward acidic residues. The Zn(2+) site is built by Cys-2285 and Cys-2288. Positions 2319, 2322, 2334, and 2337 each coordinate [4Fe-4S] cluster. The CysB motif motif lies at 2319-2337 (CSKCNDVKSDNLGDICPQC).

Belongs to the DNA polymerase type-B family. As to quaternary structure, consists of three subunits: pole, pole2 and pole3. [4Fe-4S] cluster is required as a cofactor.

The protein localises to the nucleus. The catalysed reaction is DNA(n) + a 2'-deoxyribonucleoside 5'-triphosphate = DNA(n+1) + diphosphate. Its function is as follows. DNA polymerase II participates in chromosomal DNA replication. This Dictyostelium discoideum (Social amoeba) protein is DNA polymerase epsilon catalytic subunit A (pole).